An 834-amino-acid polypeptide reads, in one-letter code: Periplasmic nitrate reductase (834 aa).

Positions M1–A29 form a signal peptide, tat-type signal. In terms of domain architecture, 4Fe-4S Mo/W bis-MGD-type spans L41–D97. Residues C48, C51, C55, and C83 each coordinate [4Fe-4S] cluster. Mo-bis(molybdopterin guanine dinucleotide)-binding positions include K85, Q152, N177, C181, W214–M221, S245–H249, Q264–D266, M375, Q379, N485, S511–D512, K534, D561, and T721–T730. Residue F797 coordinates substrate. Mo-bis(molybdopterin guanine dinucleotide) is bound by residues N805 and K822.

Belongs to the prokaryotic molybdopterin-containing oxidoreductase family. NasA/NapA/NarB subfamily. In terms of assembly, component of the periplasmic nitrate reductase NapAB complex composed of NapA and NapB. Requires [4Fe-4S] cluster as cofactor. The cofactor is Mo-bis(molybdopterin guanine dinucleotide). In terms of processing, predicted to be exported by the Tat system. The position of the signal peptide cleavage has not been experimentally proven.

The protein resides in the periplasm. The enzyme catalyses 2 Fe(II)-[cytochrome] + nitrate + 2 H(+) = 2 Fe(III)-[cytochrome] + nitrite + H2O. Catalytic subunit of the periplasmic nitrate reductase complex NapAB. Receives electrons from NapB and catalyzes the reduction of nitrate to nitrite. This chain is Periplasmic nitrate reductase, found in Ectopseudomonas mendocina (strain ymp) (Pseudomonas mendocina).